Here is a 183-residue protein sequence, read N- to C-terminus: Segregation and condensation protein B (183 aa).

The protein belongs to the ScpB family. Homodimer. Homodimerization may be required to stabilize the binding of ScpA to the Smc head domains. Component of a cohesin-like complex composed of ScpA, ScpB and the Smc homodimer, in which ScpA and ScpB bind to the head domain of Smc. The presence of the three proteins is required for the association of the complex with DNA.

The protein resides in the cytoplasm. Its function is as follows. Participates in chromosomal partition during cell division. May act via the formation of a condensin-like complex containing Smc and ScpA that pull DNA away from mid-cell into both cell halves. This Streptococcus pyogenes serotype M12 (strain MGAS2096) protein is Segregation and condensation protein B.